The primary structure comprises 135 residues: Galectin-1 (135 aa).

A2 is modified (N-acetylalanine). The Galectin domain maps to G4–E135. An N6-acetyllysine mark is found at K13 and K29. S30 is subject to Phosphoserine. A beta-D-galactoside is bound by residues H45 to R49, H53, N62, and W69 to E72. K108 carries the N6-acetyllysine; alternate modification. K108 carries the N6-succinyllysine; alternate modification. K128 is subject to N6-acetyllysine.

Homodimer. Binds LGALS3BP. Interacts with CD2, CD3, CD4, CD6, CD7, CD43, ALCAM and CD45. Interacts with laminin (via poly-N-acetyllactosamine). Interacts with SUSD2. Interacts with cargo receptor TMED10; the interaction mediates the translocation from the cytoplasm into the ERGIC (endoplasmic reticulum-Golgi intermediate compartment) and thereby secretion.

It is found in the secreted. The protein localises to the extracellular space. The protein resides in the extracellular matrix. It localises to the cytoplasm. Its function is as follows. Lectin that binds beta-galactoside and a wide array of complex carbohydrates. Plays a role in regulating apoptosis, cell proliferation and cell differentiation. Inhibits CD45 protein phosphatase activity and therefore the dephosphorylation of Lyn kinase. Strong inducer of T-cell apoptosis. This chain is Galectin-1 (LGALS1), found in Ovis aries (Sheep).